The following is a 104-amino-acid chain: Photosystem II reaction center Psb28 protein (104 aa).

The protein belongs to the Psb28 family. As to quaternary structure, part of the photosystem II complex.

The protein localises to the cellular thylakoid membrane. The chain is Photosystem II reaction center Psb28 protein from Synechococcus sp. (strain JA-2-3B'a(2-13)) (Cyanobacteria bacterium Yellowstone B-Prime).